The following is a 414-amino-acid chain: Gamma-glutamyl phosphate reductase (414 aa).

It belongs to the gamma-glutamyl phosphate reductase family.

It is found in the cytoplasm. The enzyme catalyses L-glutamate 5-semialdehyde + phosphate + NADP(+) = L-glutamyl 5-phosphate + NADPH + H(+). The protein operates within amino-acid biosynthesis; L-proline biosynthesis; L-glutamate 5-semialdehyde from L-glutamate: step 2/2. Its function is as follows. Catalyzes the NADPH-dependent reduction of L-glutamate 5-phosphate into L-glutamate 5-semialdehyde and phosphate. The product spontaneously undergoes cyclization to form 1-pyrroline-5-carboxylate. This chain is Gamma-glutamyl phosphate reductase, found in Geobacillus kaustophilus (strain HTA426).